The chain runs to 198 residues: MPLNLLKHKSWNVYNEKNIERVRRDEELARLSADKEQAKNDLEESKRRIARLRGTVYEEDSKETEPKVEFANFWAEQEEKERKRQKVYSENRHDLEIMKERHGLGPLPWYMKTDKISIDETSNNMSSKYRAPQDDPMFLVEKLLSNRKTKNPESDRRRQSRKKKSTQIQASDEMKHRRHHVHKVHHYSQKQSSSTTRR.

The stretch at 20 to 58 forms a coiled coil; the sequence is ERVRRDEELARLSADKEQAKNDLEESKRRIARLRGTVYE. The interval 144 to 198 is disordered; that stretch reads LSNRKTKNPESDRRRQSRKKKSTQIQASDEMKHRRHHVHKVHHYSQKQSSSTTRR. The segment covering 176-188 has biased composition (basic residues); sequence HRRHHVHKVHHYS. Over residues 189 to 198 the composition is skewed to polar residues; that stretch reads QKQSSSTTRR.

It is found in the nucleus. The protein resides in the nucleolus. This is an uncharacterized protein from Schizosaccharomyces pombe (strain 972 / ATCC 24843) (Fission yeast).